Consider the following 377-residue polypeptide: Pseudouridylate synthase RPUSD4, mitochondrial (377 aa).

A mitochondrion-targeting transit peptide spans 1–15; sequence MAAPRWSASGPWIRG. Residues 36–62 adopt a coiled-coil conformation; sequence AASTAINAQRLAEKLRAQKREQDTKKE. Asp153 is a catalytic residue.

This sequence belongs to the pseudouridine synthase RluA family. Interacts with 16S mt-rRNA, mt-tRNA(Phe) and mt-tRNA(Met). Forms a regulatory protein-RNA complex, consisting of RCC1L, NGRN, RPUSD3, RPUSD4, TRUB2, FASTKD2 and 16S mt-rRNA.

It localises to the mitochondrion matrix. The protein resides in the nucleus. Its subcellular location is the cytoplasm. The enzyme catalyses uridine in 5S rRNA = pseudouridine in 5S rRNA. It carries out the reaction a uridine in tRNA = a pseudouridine in tRNA. It catalyses the reaction a uridine in mRNA = a pseudouridine in mRNA. Functionally, catalyzes uridine to pseudouridine isomerization (pseudouridylation) of different mitochondrial RNA substrates. Acts on position 1397 in 16S mitochondrial ribosomal RNA (16S mt-rRNA). This modification is required for the assembly of 16S mt-rRNA into a functional mitochondrial ribosome. As a component of a functional protein-RNA module, consisting of RCC1L, NGRN, RPUSD3, RPUSD4, TRUB2, FASTKD2 and 16S mt-rRNA, controls 16S mt-rRNA abundance and is required for intra-mitochondrial translation. Acts on position 39 in mitochondrial tRNA(Phe). Also catalyzes pseudouridylation of mRNAs in nucleus: acts as a regulator of pre-mRNA splicing by mediating pseudouridylation of pre-mRNAs at locations associated with alternatively spliced regions. Pseudouridylation of pre-mRNAs near splice sites directly regulates mRNA splicing and mRNA 3'-end processing. The protein is Pseudouridylate synthase RPUSD4, mitochondrial of Homo sapiens (Human).